The following is a 270-amino-acid chain: PspA protein (270 aa).

The tract at residues 238 to 270 (MRGEALPAGGTTATPRPATETSGGAIAEQPYGQ) is disordered. Residues 240–258 (GEALPAGGTTATPRPATET) are compositionally biased toward low complexity.

It belongs to the PspA/Vipp/IM30 family.

It localises to the cytoplasm. In terms of biological role, involved in resistance to stress. Associates with and regulates lipid droplets (LDs) homeostasis under conditions of stress and may regulate non-replicating persistence (NRP). Could be involved in preservation of envelope integrity and tolerance to surface stress. This chain is PspA protein, found in Mycobacterium tuberculosis (strain ATCC 25177 / H37Ra).